We begin with the raw amino-acid sequence, 209 residues long: Kynurenine formamidase (209 aa).

Tryptophan 18 lines the substrate pocket. Zn(2+) is bound by residues histidine 48, histidine 52, and aspartate 54. Catalysis depends on histidine 58, which acts as the Proton donor/acceptor. Zn(2+) is bound by residues histidine 160 and glutamate 172.

It belongs to the Cyclase 1 superfamily. KynB family. As to quaternary structure, homodimer. It depends on Zn(2+) as a cofactor.

The enzyme catalyses N-formyl-L-kynurenine + H2O = L-kynurenine + formate + H(+). Its pathway is amino-acid degradation; L-tryptophan degradation via kynurenine pathway; L-kynurenine from L-tryptophan: step 2/2. Its function is as follows. Catalyzes the hydrolysis of N-formyl-L-kynurenine to L-kynurenine, the second step in the kynurenine pathway of tryptophan degradation. In Sphingopyxis alaskensis (strain DSM 13593 / LMG 18877 / RB2256) (Sphingomonas alaskensis), this protein is Kynurenine formamidase.